The sequence spans 321 residues: D-alanine--D-alanine ligase (321 aa).

Residues 121-315 (RSCFLKNNIN…FTNLIEEIIK (195 aa)) enclose the ATP-grasp domain. Position 148 to 199 (148 to 199 (MKRPYVIKPLKQGSSIGVEVIFEEDDFHFIDYDFPYGEDIIIEQYIQGQELQ)) interacts with ATP. Mg(2+)-binding residues include Glu-268, Glu-282, and Asn-284.

It belongs to the D-alanine--D-alanine ligase family. Mg(2+) serves as cofactor. It depends on Mn(2+) as a cofactor.

The protein resides in the cytoplasm. It catalyses the reaction 2 D-alanine + ATP = D-alanyl-D-alanine + ADP + phosphate + H(+). The protein operates within cell wall biogenesis; peptidoglycan biosynthesis. Functionally, cell wall formation. The polypeptide is D-alanine--D-alanine ligase (Rickettsia typhi (strain ATCC VR-144 / Wilmington)).